The chain runs to 157 residues: Crossover junction endodeoxyribonuclease RuvC (157 aa).

Catalysis depends on residues aspartate 7, glutamate 67, and aspartate 140. 3 residues coordinate Mg(2+): aspartate 7, glutamate 67, and aspartate 140.

This sequence belongs to the RuvC family. In terms of assembly, homodimer which binds Holliday junction (HJ) DNA. The HJ becomes 2-fold symmetrical on binding to RuvC with unstacked arms; it has a different conformation from HJ DNA in complex with RuvA. In the full resolvosome a probable DNA-RuvA(4)-RuvB(12)-RuvC(2) complex forms which resolves the HJ. The cofactor is Mg(2+).

It is found in the cytoplasm. The enzyme catalyses Endonucleolytic cleavage at a junction such as a reciprocal single-stranded crossover between two homologous DNA duplexes (Holliday junction).. In terms of biological role, the RuvA-RuvB-RuvC complex processes Holliday junction (HJ) DNA during genetic recombination and DNA repair. Endonuclease that resolves HJ intermediates. Cleaves cruciform DNA by making single-stranded nicks across the HJ at symmetrical positions within the homologous arms, yielding a 5'-phosphate and a 3'-hydroxyl group; requires a central core of homology in the junction. The consensus cleavage sequence is 5'-(A/T)TT(C/G)-3'. Cleavage occurs on the 3'-side of the TT dinucleotide at the point of strand exchange. HJ branch migration catalyzed by RuvA-RuvB allows RuvC to scan DNA until it finds its consensus sequence, where it cleaves and resolves the cruciform DNA. This chain is Crossover junction endodeoxyribonuclease RuvC, found in Rickettsia prowazekii (strain Madrid E).